The following is a 25-amino-acid chain: Snaclec bothroalternin subunit alpha/beta (25 aa).

The C-type lectin domain maps to 1-25 (DCPSDWSNHEGHCYRVFNEWMNWAD). The cysteines at positions 2 and 13 are disulfide-linked.

Belongs to the snaclec family. Heterodimer of subunits alpha and beta; disulfide-linked. In terms of tissue distribution, expressed by the venom gland.

It localises to the secreted. Its function is as follows. Thrombin (F2) inhibitor that inhibits aggregation of rabbit platelets induced by alpha-thrombin. The chain is Snaclec bothroalternin subunit alpha/beta from Bothrops alternatus (Urutu).